A 173-amino-acid chain; its full sequence is Co-chaperone protein HscB homolog (173 aa).

The 73-residue stretch at 5–77 folds into the J domain; sequence CHYALFDLQP…PRRARYLLAI (73 aa).

This sequence belongs to the HscB family. As to quaternary structure, interacts with HscA and stimulates its ATPase activity.

Functionally, co-chaperone involved in the maturation of iron-sulfur cluster-containing proteins. Seems to help targeting proteins to be folded toward HscA. The chain is Co-chaperone protein HscB homolog from Pseudomonas entomophila (strain L48).